We begin with the raw amino-acid sequence, 468 residues long: uncharacterized protein (468 aa).

Residues 1-19 (MRVLSVLLVALTVAGSAYS) form the signal peptide. N-linked (GlcNAc...) asparagine glycans are attached at residues Asn86 and Asn334. The tract at residues 401 to 421 (NPSTNLPETSPPTEQPTAPPA) is disordered. The segment covering 409–421 (TSPPTEQPTAPPA) has biased composition (pro residues). Residue Asn435 is glycosylated (N-linked (GlcNAc...) asparagine). Asn444 carries the GPI-like-anchor amidated asparagine lipid modification. A propeptide spans 445–468 (SASSIEMSKLVVAILSLFILAFFH) (removed in mature form).

The protein resides in the cell membrane. This is an uncharacterized protein from Dictyostelium discoideum (Social amoeba).